The sequence spans 704 residues: Protein arginine N-methyltransferase 7 (704 aa).

SAM-dependent MTase PRMT-type domains are found at residues 14–356 and 366–704; these read ENTW…YSLW and SQPA…EKSE.

The protein belongs to the class I-like SAM-binding methyltransferase superfamily. Protein arginine N-methyltransferase family. PRMT7 subfamily.

In terms of biological role, essential arginine methyltransferase that can both catalyze the formation of omega-N monomethylarginine (MMA) and symmetrical dimethylarginine (sDMA). Specifically mediates the symmetrical dimethylation of arginine residues in the small nuclear ribonucleoproteins SmD1 and SmD3. In Drosophila grimshawi (Hawaiian fruit fly), this protein is Protein arginine N-methyltransferase 7 (Art7).